The primary structure comprises 159 residues: Probable E3 ubiquitin-protein ligase RHA1A (159 aa).

Residues 86-130 (CTVCLSDFESDDKVRQLPKCGHVFHHYCLDRWIVDYNKMKCPVCR) form an RING-type; atypical zinc finger.

In terms of tissue distribution, predominantly expressed in stems.

It carries out the reaction S-ubiquitinyl-[E2 ubiquitin-conjugating enzyme]-L-cysteine + [acceptor protein]-L-lysine = [E2 ubiquitin-conjugating enzyme]-L-cysteine + N(6)-ubiquitinyl-[acceptor protein]-L-lysine.. It participates in protein modification; protein ubiquitination. Its function is as follows. Probable E3 ubiquitin-protein ligase that may possess E3 ubiquitin ligase activity in vitro. This Arabidopsis thaliana (Mouse-ear cress) protein is Probable E3 ubiquitin-protein ligase RHA1A.